The primary structure comprises 46 residues: Probable butyrate kinase (46 aa).

The protein belongs to the acetokinase family.

The protein localises to the cytoplasm. The catalysed reaction is butanoate + ATP = butanoyl phosphate + ADP. This chain is Probable butyrate kinase (buk), found in Geobacillus stearothermophilus (Bacillus stearothermophilus).